A 315-amino-acid polypeptide reads, in one-letter code: Thymidylate synthase (315 aa).

DUMP contacts are provided by residues Arg-29 and 156–157 (RR). Cys-176 acts as the Nucleophile in catalysis. DUMP-binding positions include 213 to 216 (RSCD), Asn-224, and 254 to 256 (HVY). Asp-216 provides a ligand contact to (6R)-5,10-methylene-5,6,7,8-tetrahydrofolate.

This sequence belongs to the thymidylate synthase family. As to quaternary structure, homodimer.

It carries out the reaction dUMP + (6R)-5,10-methylene-5,6,7,8-tetrahydrofolate = 7,8-dihydrofolate + dTMP. Its pathway is pyrimidine metabolism; dTTP biosynthesis. The chain is Thymidylate synthase (TMP1) from Candida albicans (strain SC5314 / ATCC MYA-2876) (Yeast).